A 220-amino-acid chain; its full sequence is Deoxyribose-phosphate aldolase (220 aa).

The active-site Proton donor/acceptor is the D89. The active-site Schiff-base intermediate with acetaldehyde is K151. The Proton donor/acceptor role is filled by K180.

The protein belongs to the DeoC/FbaB aldolase family. DeoC type 1 subfamily.

Its subcellular location is the cytoplasm. The catalysed reaction is 2-deoxy-D-ribose 5-phosphate = D-glyceraldehyde 3-phosphate + acetaldehyde. It functions in the pathway carbohydrate degradation; 2-deoxy-D-ribose 1-phosphate degradation; D-glyceraldehyde 3-phosphate and acetaldehyde from 2-deoxy-alpha-D-ribose 1-phosphate: step 2/2. Functionally, catalyzes a reversible aldol reaction between acetaldehyde and D-glyceraldehyde 3-phosphate to generate 2-deoxy-D-ribose 5-phosphate. This is Deoxyribose-phosphate aldolase from Mycoplasmopsis pulmonis (strain UAB CTIP) (Mycoplasma pulmonis).